Here is a 20-residue protein sequence, read N- to C-terminus: Cytochrome P450 2A7 (20 aa).

The protein belongs to the cytochrome P450 family. Heme serves as cofactor.

The protein localises to the endoplasmic reticulum membrane. It localises to the microsome membrane. The catalysed reaction is an organic molecule + reduced [NADPH--hemoprotein reductase] + O2 = an alcohol + oxidized [NADPH--hemoprotein reductase] + H2O + H(+). Its function is as follows. Exhibits a high coumarin 7-hydroxylase activity. This Papio sp. (Baboon) protein is Cytochrome P450 2A7 (CYP2A7).